Here is a 233-residue protein sequence, read N- to C-terminus: Lipoprotein-releasing system ATP-binding protein LolD (233 aa).

An ABC transporter domain is found at 6 to 233 (LQCDNLCKRY…TAELSLMGAE (228 aa)). 42–49 (GSSGSGKS) provides a ligand contact to ATP.

The protein belongs to the ABC transporter superfamily. Lipoprotein translocase (TC 3.A.1.125) family. As to quaternary structure, the complex is composed of two ATP-binding proteins (LolD) and two transmembrane proteins (LolC and LolE).

Its subcellular location is the cell inner membrane. In terms of biological role, part of the ABC transporter complex LolCDE involved in the translocation of mature outer membrane-directed lipoproteins, from the inner membrane to the periplasmic chaperone, LolA. Responsible for the formation of the LolA-lipoprotein complex in an ATP-dependent manner. This is Lipoprotein-releasing system ATP-binding protein LolD from Shigella flexneri.